Here is a 694-residue protein sequence, read N- to C-terminus: Putative serine/threonine-protein kinase R679 (694 aa).

The 382-residue stretch at isoleucine 167 to threonine 548 folds into the Protein kinase domain. ATP contacts are provided by residues valine 173–alanine 181 and lysine 196. Catalysis depends on aspartate 395, which acts as the Proton acceptor.

The protein belongs to the protein kinase superfamily. Ser/Thr protein kinase family.

Its subcellular location is the virion. It carries out the reaction L-seryl-[protein] + ATP = O-phospho-L-seryl-[protein] + ADP + H(+). It catalyses the reaction L-threonyl-[protein] + ATP = O-phospho-L-threonyl-[protein] + ADP + H(+). In Acanthamoeba polyphaga (Amoeba), this protein is Putative serine/threonine-protein kinase R679.